The following is a 625-amino-acid chain: Probable potassium transport system protein Kup 2 (625 aa).

12 helical membrane passes run 15-35, 52-72, 98-118, 134-154, 164-184, 212-232, 246-266, 284-304, 336-356, 365-385, 394-414, and 417-437; these read LSFA…LYAF, ILSL…LVIV, GGWL…DGML, LSPN…FFLF, IGVY…ILGF, FALF…ALFA, WFAV…AFVL, FLPV…QAII, VYLP…VVIF, AYGI…GIIA, FKIL…AGNI, and LLTG…VMYT.

Belongs to the HAK/KUP transporter (TC 2.A.72) family.

It is found in the cell inner membrane. The enzyme catalyses K(+)(in) + H(+)(in) = K(+)(out) + H(+)(out). Transport of potassium into the cell. Likely operates as a K(+):H(+) symporter. In Legionella pneumophila (strain Paris), this protein is Probable potassium transport system protein Kup 2.